Reading from the N-terminus, the 513-residue chain is ATP synthase subunit alpha (513 aa).

ATP is bound at residue 169–176 (GDRQIGKT).

It belongs to the ATPase alpha/beta chains family. In terms of assembly, F-type ATPases have 2 components, CF(1) - the catalytic core - and CF(0) - the membrane proton channel. CF(1) has five subunits: alpha(3), beta(3), gamma(1), delta(1), epsilon(1). CF(0) has three main subunits: a(1), b(2) and c(9-12). The alpha and beta chains form an alternating ring which encloses part of the gamma chain. CF(1) is attached to CF(0) by a central stalk formed by the gamma and epsilon chains, while a peripheral stalk is formed by the delta and b chains.

The protein resides in the cell inner membrane. It carries out the reaction ATP + H2O + 4 H(+)(in) = ADP + phosphate + 5 H(+)(out). Functionally, produces ATP from ADP in the presence of a proton gradient across the membrane. The alpha chain is a regulatory subunit. In Francisella tularensis subsp. mediasiatica (strain FSC147), this protein is ATP synthase subunit alpha.